The sequence spans 65 residues: Large ribosomal subunit protein bL33m (65 aa).

The N-terminal 8 residues, 1-8, are a transit peptide targeting the mitochondrion; that stretch reads MFLSAVFF.

This sequence belongs to the bacterial ribosomal protein bL33 family. Component of the mitochondrial large ribosomal subunit (mt-LSU). Mature mammalian 55S mitochondrial ribosomes consist of a small (28S) and a large (39S) subunit. The 28S small subunit contains a 12S ribosomal RNA (12S mt-rRNA) and 30 different proteins. The 39S large subunit contains a 16S rRNA (16S mt-rRNA), a copy of mitochondrial valine transfer RNA (mt-tRNA(Val)), which plays an integral structural role, and 52 different proteins.

The protein localises to the mitochondrion. The sequence is that of Large ribosomal subunit protein bL33m (MRPL33) from Homo sapiens (Human).